The following is a 139-amino-acid chain: Large ribosomal subunit protein uL16 (139 aa).

A compositionally biased stretch (basic residues) spans 1–21 (MLSPRKTKFRKQHRGRMRGKA). The tract at residues 1 to 23 (MLSPRKTKFRKQHRGRMRGKATR) is disordered.

It belongs to the universal ribosomal protein uL16 family. In terms of assembly, part of the 50S ribosomal subunit.

Functionally, binds 23S rRNA and is also seen to make contacts with the A and possibly P site tRNAs. The protein is Large ribosomal subunit protein uL16 of Acaryochloris marina (strain MBIC 11017).